The chain runs to 488 residues: 3-octaprenyl-4-hydroxybenzoate carboxy-lyase (488 aa).

Asparagine 172 contacts Mn(2+). Residues 175 to 177 (IYR), 189 to 191 (RWL), and 194 to 195 (RG) contribute to the prenylated FMN site. Glutamate 238 is a Mn(2+) binding site. Aspartate 287 serves as the catalytic Proton donor.

It belongs to the UbiD family. Homohexamer. The cofactor is prenylated FMN. Mn(2+) is required as a cofactor.

The protein resides in the cell membrane. It catalyses the reaction a 4-hydroxy-3-(all-trans-polyprenyl)benzoate + H(+) = a 2-(all-trans-polyprenyl)phenol + CO2. It participates in cofactor biosynthesis; ubiquinone biosynthesis. Functionally, catalyzes the decarboxylation of 3-octaprenyl-4-hydroxy benzoate to 2-octaprenylphenol, an intermediate step in ubiquinone biosynthesis. The chain is 3-octaprenyl-4-hydroxybenzoate carboxy-lyase from Legionella pneumophila (strain Paris).